A 625-amino-acid chain; its full sequence is Putative xanthine/uracil permease C887.17 (625 aa).

10 helical membrane passes run 49–69 (AGLTTFFAMAYILAVNATILV), 107–127 (AAISALASFCMGLFANMPVGM), 154–174 (EALLAVFVEGFIFTGLTVIGL), 192–212 (AGIGLYLTIIGLSPSAGLGVI), 246–263 (MWVGIFCGGVLTAILMMY), 328–348 (FAIALITFLYVDIMDMTGTLY), 369–389 (VAYIVDALSISIGSLFGCSPV), 406–426 (GILGMVVGICFFISLFFAPIF), 429–449 (IPVWATGSTLVLVGSMMMKST), and 465–485 (ITIALMPFTYSIAYGLIAGII). Residues 595–625 (EAVGESESFSNRQQDFRTPYAGIDMDTDDRI) form a disordered region.

This sequence belongs to the nucleobase:cation symporter-2 (NCS2) (TC 2.A.40) family. Azg-like subfamily.

It is found in the golgi apparatus membrane. This chain is Putative xanthine/uracil permease C887.17, found in Schizosaccharomyces pombe (strain 972 / ATCC 24843) (Fission yeast).